Here is a 298-residue protein sequence, read N- to C-terminus: Hydroxymethylglutaryl-CoA lyase, mitochondrial (298 aa).

Residues 6–273 enclose the Pyruvate carboxyltransferase domain; it reads VKVVEVGPRD…HTGVDLQKLM (268 aa). Position 14 (arginine 14) interacts with substrate. Aspartate 15 is an a divalent metal cation binding site. At lysine 21 the chain carries N6-acetyllysine. A divalent metal cation contacts are provided by histidine 206 and histidine 208. The active site involves cysteine 239. Asparagine 248 provides a ligand contact to a divalent metal cation. Positions 296-298 match the Microbody targeting signal motif; it reads CRL.

This sequence belongs to the HMG-CoA lyase family. As to quaternary structure, homodimer; disulfide-linked. Can also form homotetramers.

It localises to the mitochondrion matrix. It is found in the peroxisome. The enzyme catalyses (3S)-3-hydroxy-3-methylglutaryl-CoA = acetoacetate + acetyl-CoA. Its pathway is metabolic intermediate metabolism; (S)-3-hydroxy-3-methylglutaryl-CoA degradation; acetoacetate from (S)-3-hydroxy-3-methylglutaryl-CoA: step 1/1. Mitochondrial 3-hydroxy-3-methylglutaryl-CoA lyase that catalyzes a cation-dependent cleavage of (S)-3-hydroxy-3-methylglutaryl-CoA into acetyl-CoA and acetoacetate, a key step in ketogenesis. Terminal step in leucine catabolism. Ketone bodies (beta-hydroxybutyrate, acetoacetate and acetone) are essential as an alternative source of energy to glucose, as lipid precursors and as regulators of metabolism. The chain is Hydroxymethylglutaryl-CoA lyase, mitochondrial (HMGCL) from Gallus gallus (Chicken).